The following is a 185-amino-acid chain: Ribosome-recycling factor (185 aa).

The protein belongs to the RRF family.

The protein localises to the cytoplasm. Responsible for the release of ribosomes from messenger RNA at the termination of protein biosynthesis. May increase the efficiency of translation by recycling ribosomes from one round of translation to another. The chain is Ribosome-recycling factor from Citrifermentans bemidjiense (strain ATCC BAA-1014 / DSM 16622 / JCM 12645 / Bem) (Geobacter bemidjiensis).